The primary structure comprises 147 residues: D-aminoacyl-tRNA deacylase (147 aa).

The Gly-cisPro motif, important for rejection of L-amino acids signature appears at 136-137; that stretch reads GP.

The protein belongs to the DTD family. Homodimer.

It is found in the cytoplasm. The catalysed reaction is glycyl-tRNA(Ala) + H2O = tRNA(Ala) + glycine + H(+). It catalyses the reaction a D-aminoacyl-tRNA + H2O = a tRNA + a D-alpha-amino acid + H(+). Its function is as follows. An aminoacyl-tRNA editing enzyme that deacylates mischarged D-aminoacyl-tRNAs. Also deacylates mischarged glycyl-tRNA(Ala), protecting cells against glycine mischarging by AlaRS. Acts via tRNA-based rather than protein-based catalysis; rejects L-amino acids rather than detecting D-amino acids in the active site. By recycling D-aminoacyl-tRNA to D-amino acids and free tRNA molecules, this enzyme counteracts the toxicity associated with the formation of D-aminoacyl-tRNA entities in vivo and helps enforce protein L-homochirality. This chain is D-aminoacyl-tRNA deacylase, found in Nitratiruptor sp. (strain SB155-2).